The sequence spans 451 residues: UDP-N-acetyl-alpha-D-muramoyl-L-alanyl-L-glutamate epimerase (451 aa).

Belongs to the MurL family.

The enzyme catalyses UDP-N-acetyl-alpha-D-muramoyl-L-alanyl-L-glutamate + ATP + H2O = UDP-N-acetyl-alpha-D-muramoyl-L-alanyl-D-glutamate + AMP + diphosphate + H(+). The protein operates within cell wall biogenesis; peptidoglycan biosynthesis. Its function is as follows. Cell wall formation. Catalyzes epimerization of the terminal L-glutamate in UDP-N-acetyl-alpha-D-muramoyl-L-alanyl-L-glutamate. The sequence is that of UDP-N-acetyl-alpha-D-muramoyl-L-alanyl-L-glutamate epimerase from Xanthomonas oryzae pv. oryzae (strain MAFF 311018).